The primary structure comprises 431 residues: Histidinol dehydrogenase (431 aa).

NAD(+) contacts are provided by tyrosine 130, glutamine 191, and asparagine 214. Substrate-binding residues include serine 237, glutamine 259, and histidine 262. Residues glutamine 259 and histidine 262 each contribute to the Zn(2+) site. Residues glutamate 327 and histidine 328 each act as proton acceptor in the active site. Residues histidine 328, aspartate 361, glutamate 415, and histidine 420 each contribute to the substrate site. Residue aspartate 361 participates in Zn(2+) binding. Histidine 420 is a binding site for Zn(2+).

Belongs to the histidinol dehydrogenase family. Zn(2+) is required as a cofactor.

It catalyses the reaction L-histidinol + 2 NAD(+) + H2O = L-histidine + 2 NADH + 3 H(+). Its pathway is amino-acid biosynthesis; L-histidine biosynthesis; L-histidine from 5-phospho-alpha-D-ribose 1-diphosphate: step 9/9. Functionally, catalyzes the sequential NAD-dependent oxidations of L-histidinol to L-histidinaldehyde and then to L-histidine. The protein is Histidinol dehydrogenase of Rhodopseudomonas palustris (strain ATCC BAA-98 / CGA009).